The following is a 265-amino-acid chain: tRNA pseudouridine synthase A (265 aa).

The active-site Nucleophile is the Asp-53. Substrate is bound at residue Tyr-111.

This sequence belongs to the tRNA pseudouridine synthase TruA family. As to quaternary structure, homodimer.

It catalyses the reaction uridine(38/39/40) in tRNA = pseudouridine(38/39/40) in tRNA. Formation of pseudouridine at positions 38, 39 and 40 in the anticodon stem and loop of transfer RNAs. The polypeptide is tRNA pseudouridine synthase A (Acinetobacter baumannii (strain ATCC 17978 / DSM 105126 / CIP 53.77 / LMG 1025 / NCDC KC755 / 5377)).